The chain runs to 1526 residues: MMSLINLDLVISAVTSIANPVIKEKILRSETVIKLLQQFNLDPEHPPADFSGVYAYTLVEYGVGKPKAFLELFRQEAIKQAFRKALDHNNPSILLSEVDTFLDACTLGDEIRSLELDVRREVAAFATVFIEVAKRSRTPADVLMNQQIGSLHKRIAGIQEQLERLPTLEGIRTEIARLAAQNYPALTPTATENQCRAIALAQQMRGWFETLGYRLEKYEIWAEEYFEWIINVPVRRSYDRILVRGVAGEVRLSDVMALCQSVNQQKTDEGWLVSTRRISRAARDEVKKEENRHLDCFTFDELIDLDADFSGYLDWLEAEIKRRKIDQKYVPLACTKEEIDPVTKRRIGISRYEAEDGWIDGYIDLWLDDPAKEHISILGEFGTGKTWFVFHYAWTALQRYKDAQRRGVERPRLPLVITLRDFAKALNVENVLAGFFFTQHNIRLNSEVFDQLNRMGKLLLIFDGFDEMAAKVDRQQMINNFWELAKVVVPGSKVILTCRTEHFPEAKEGRALLNAELQASTNKLTGETPQFEVLELEKFNDEQIRQVLLYQAEEATVEQIMGNSQLLDLARRPVMTDLILEALPDIEAGKPIDMSRVYLYAVRHKMERDIKAERTFNSLADKLYFLCELSWEMLSTDQMSLNYRLFPERIRRLFGSVVQEEKDLDHWHYDMMAQTMLVRNADGDYTPAHRSLLEFFVAYKFAAELGALARDFTEVGQAQSGLDSSTASIDYTWSGYFSRQLDSTGCREVIAPLRQFKSEFLDKLRETFGKAKLTKAVIDLLLPMLDDNEPLIKIIEATRGRTEDEVNYVGGNAATLLVKLNKMVLEGRDLSHTVIIGADFTNTSLRCVNFTEANLAYSVFTKILGSVLTVAFSPDGKLFATGDSGGIVRFWEAATGKELLTCKGHNSWVNSVGFSQDGKMLASGSDDQTVRLWDISSGQCLKTFKGHTSRVRSVVFSPNSLMLASGSSDQTVRLWDISSGECLYIFQGHTGWVYSVAFNLDGSMLATGSGDQTVRLWDISSSQCFYIFQGHTSCVRSVVFSSDGAMLASGSDDQTVRLWDISSGNCLYTLQGHTSCVRSVVFSPDGAMLASGGDDQIVRLWDISSGNCLYTLQGYTSWVRFLVFSPNGVTLANGSSDQIVRLWDISSKKCLYTLQGHTNWVNAVAFSPDGATLASGSGDQTVRLWDISSSKCLYILQGHTSWVNSVVFNPDGSTLASGSSDQTVRLWEINSSKCLCTFQGHTSWVNSVVFNPDGSMLASGSSDKTVRLWDISSSKCLHTFQGHTNWVNSVAFNPDGSMLASGSGDQTVRLWEISSSKCLHTFQGHTSWVSSVTFSPDGTMLASGSDDQTVRLWSISSGECLYTFLGHTNWVGSVIFSPDGAILASGSGDQTVRLWSISSGKCLYTLQGHNNWVGSIVFSPDGTLLASGSDDQTVRLWNISSGECLYTLHGHINSVRSVAFSSDGLILASGSDDETIKLWDVKTGECIKTLKSEKIYEGMNITSVRGLTEVEKATLKTLGAVENREI.

WD repeat units lie at residues 334 to 376 (CTKE…EHIS), 862 to 901 (KILGSVLTVAFSPDGKLFATGDSGGIVRFWEAATGKELLT), 904 to 945 (GHNS…KTFK), 946 to 985 (GHTSRVRSVVFSPNSLMLASGSSDQTVRLWDISSGECLYI), 988 to 1027 (GHTGWVYSVAFNLDGSMLATGSGDQTVRLWDISSSQCFYI), 1030 to 1069 (GHTSCVRSVVFSSDGAMLASGSDDQTVRLWDISSGNCLYT), 1072 to 1111 (GHTSCVRSVVFSPDGAMLASGGDDQIVRLWDISSGNCLYT), 1114 to 1153 (GYTSWVRFLVFSPNGVTLANGSSDQIVRLWDISSKKCLYT), 1156 to 1195 (GHTNWVNAVAFSPDGATLASGSGDQTVRLWDISSSKCLYI), 1198 to 1237 (GHTSWVNSVVFNPDGSTLASGSSDQTVRLWEINSSKCLCT), 1240 to 1279 (GHTSWVNSVVFNPDGSMLASGSSDKTVRLWDISSSKCLHT), 1282 to 1321 (GHTNWVNSVAFNPDGSMLASGSGDQTVRLWEISSSKCLHT), 1324 to 1363 (GHTSWVSSVTFSPDGTMLASGSDDQTVRLWSISSGECLYT), 1366 to 1405 (GHTNWVGSVIFSPDGAILASGSGDQTVRLWSISSGKCLYT), 1408 to 1447 (GHNNWVGSIVFSPDGTLLASGSDDQTVRLWNISSGECLYT), and 1450 to 1491 (GHIN…KTLK). In terms of domain architecture, Pentapeptide repeat spans 823–862 (MVLEGRDLSHTVIIGADFTNTSLRCVNFTEANLAYSVFTK).

This is an uncharacterized protein from Nostoc sp. (strain PCC 7120 / SAG 25.82 / UTEX 2576).